The primary structure comprises 344 residues: Beta-1,4-galactosyltransferase 4 (344 aa).

At 1-12 the chain is on the cytoplasmic side; it reads MGCNPPYLLPYR. Residues 13-38 form a helical; Signal-anchor for type II membrane protein membrane-spanning segment; the sequence is LRLLLFFTLCLTVVGWVTSNYFVDPI. At 39–344 the chain is on the lumenal side; it reads QVIPKAKVFM…NITVDFWTGV (306 aa). Cysteine 77 and cysteine 118 are joined by a disulfide. UDP-alpha-D-galactose is bound by residues 129 to 133, 168 to 170, and 195 to 196; these read PHRNR, FNR, and VD. Cysteine 189 and cysteine 208 form a disulfide bridge. Residue aspartate 196 participates in Mn(2+) binding. N-linked (GlcNAc...) asparagine glycosylation is present at asparagine 220. 2 residues coordinate UDP-alpha-D-galactose: tyrosine 224 and tryptophan 256. 258–261 lines the N-acetyl-D-glucosamine pocket; it reads GEDD. Mn(2+) is bound at residue histidine 289. 289-291 is a binding site for UDP-alpha-D-galactose; it reads HTR. Residue arginine 301 coordinates N-acetyl-D-glucosamine. N-linked (GlcNAc...) asparagine glycosylation is present at asparagine 335.

This sequence belongs to the glycosyltransferase 7 family. Requires Mn(2+) as cofactor.

The protein localises to the golgi apparatus. It localises to the golgi stack membrane. The enzyme catalyses N-acetyl-D-glucosamine + UDP-alpha-D-galactose = beta-D-galactosyl-(1-&gt;4)-N-acetyl-D-glucosamine + UDP + H(+). It carries out the reaction a beta-D-GlcNAc-(1-&gt;3)-beta-D-Gal-(1-&gt;4)-beta-D-Glc-(1&lt;-&gt;1)-Cer(d18:1(4E)) + UDP-alpha-D-galactose = a neolactoside nLc4Cer(d18:1(4E)) + UDP + H(+). The protein operates within protein modification; protein glycosylation. Functionally, galactose (Gal) transferase involved in the biosynthesis of glycoproteins, proteoglycans, and glycosyphingolipids. Catalyzes the transfer of Gal residue via a beta1-&gt;4 linkage from UDP-Gal to the non-reducing terminal N-acetyl glucosamine 6-O-sulfate (6-O-sulfoGlcNAc) in the linearly growing chain of both N- and O-linked keratan sulfate proteoglycans. Cooperates with B3GNT7 N-acetyl glucosamine transferase and CHST6 and CHST1 sulfotransferases to construct and elongate mono- and disulfated disaccharide units [-&gt;3Galbeta1-&gt;4(6-sulfoGlcNAcbeta)1-&gt;] and [-&gt;3(6-sulfoGalbeta)1-&gt;4(6-sulfoGlcNAcbeta)1-&gt;] within keratan sulfate polymer. The polypeptide is Beta-1,4-galactosyltransferase 4 (B4GALT4) (Cricetulus griseus (Chinese hamster)).